The chain runs to 65 residues: Lantibiotic lacticin 3147 A2 (65 aa).

The propeptide occupies methionine 1–glycine 36. Threonine 37 bears the 2-oxobutanoic acid mark. Threonine 38 and threonine 41 each carry 2,3-didehydrobutyrine. Serine 45 and serine 48 each carry 2,3-didehydroalanine (Ser). The segment at residues serine 52–cysteine 56 is a cross-link (lanthionine (Ser-Cys)). 2 cross-links (beta-methyllanthionine (Thr-Cys)) span residues threonine 58–cysteine 61 and threonine 62–cysteine 65.

Maturation of lantibiotics involves the enzymatic conversion of Thr, and Ser into dehydrated AA and the formation of thioether bonds with cysteine. This is followed by membrane translocation and cleavage of the modified precursor. Post-translationally, it is not established whether the 2,3-didehydrobutyrines are the E- or Z-isomers. In the NMR model they were assumed to be the Z-isomer.

Its subcellular location is the secreted. Lanthionine-containing peptide antibiotic (lantibiotic) active on Gram-positive bacteria. The bactericidal activity of lantibiotics is based on depolarization of energized bacterial cytoplasmic membranes, initiated by the formation of aqueous transmembrane pores. When present individually lacticin 3147 A2 exhibits weak activity towards L.lactis strain AM2 and L.lactis strain HP, and no activity towards L.lactis strain IFPL359, but when combined with lacticin 3147 A1 it displays strong activity towards all three strains. This is Lantibiotic lacticin 3147 A2 from Lactococcus lactis subsp. lactis (Streptococcus lactis).